Here is a 148-residue protein sequence, read N- to C-terminus: MCPPVRQRPAQAPPAKRQALETVPHPQNRGRLMSPKARPPKMQRRPRPPVAKRRRFPRSPQQVERPILPPVESTPQDMEPGQVQSPPQITAVIQLRQERDTMRPPIYLPALLANCGPAGLLRAHRLPQPKPPCQSRQRPSPDSQTSPC.

Low complexity predominate over residues 1–17 (MCPPVRQRPAQAPPAKR). 2 disordered regions span residues 1-86 (MCPP…VQSP) and 122-148 (RAHRLPQPKPPCQSRQRPSPDSQTSPC). Basic residues predominate over residues 38–57 (RPPKMQRRPRPPVAKRRRFP). Positions 134-148 (QSRQRPSPDSQTSPC) are enriched in polar residues.

Belongs to the Epstein-Barr virus BLLF2 family.

This is an uncharacterized protein from Homo sapiens (Human).